Consider the following 439-residue polypeptide: Glutamate-1-semialdehyde 2,1-aminomutase (439 aa).

Residue lysine 279 is modified to N6-(pyridoxal phosphate)lysine.

The protein belongs to the class-III pyridoxal-phosphate-dependent aminotransferase family. HemL subfamily. As to quaternary structure, homodimer. The cofactor is pyridoxal 5'-phosphate.

Its subcellular location is the cytoplasm. The enzyme catalyses (S)-4-amino-5-oxopentanoate = 5-aminolevulinate. Its pathway is porphyrin-containing compound metabolism; protoporphyrin-IX biosynthesis; 5-aminolevulinate from L-glutamyl-tRNA(Glu): step 2/2. The protein is Glutamate-1-semialdehyde 2,1-aminomutase of Rhodopirellula baltica (strain DSM 10527 / NCIMB 13988 / SH1).